Reading from the N-terminus, the 988-residue chain is uncharacterized protein (988 aa).

Residues 1–17 (MIRLVFLFLLVVLSVEL) form the signal peptide. Residues 111-176 (YQNPSTFPST…SKLNQKSSKS (66 aa)) form a disordered region. Positions 114–140 (PSTFPSTTTASTTTSTTTMPPTYQTTT) are enriched in low complexity. N-linked (GlcNAc...) asparagine glycosylation is found at Asn-247, Asn-389, Asn-529, and Asn-601. A helical membrane pass occupies residues 690-710 (IMIFTIFSVLSALTCLMCMYL). N-linked (GlcNAc...) asparagine glycosylation occurs at Asn-720. 6 helical membrane-spanning segments follow: residues 721 to 741 (LTAV…AFII), 753 to 773 (LLFP…TVLI), 784 to 804 (VLIA…WLLL), 832 to 852 (MILL…IFAL), 864 to 884 (LMIS…LPLI), and 891 to 911 (TVMA…SHTG). Residues 966-988 (RSEDTLRRNTSLYGTEGYELPTP) are disordered. A glycan (N-linked (GlcNAc...) asparagine) is linked at Asn-974.

It localises to the membrane. This is an uncharacterized protein from Caenorhabditis elegans.